We begin with the raw amino-acid sequence, 697 residues long: tRNA 5-methylaminomethyl-2-thiouridine biosynthesis bifunctional protein MnmC (697 aa).

Residues 1–275 form a tRNA (mnm(5)s(2)U34)-methyltransferase region; it reads MTAKPHKSCQ…KPATLAAIDH (275 aa). The FAD-dependent cmnm(5)s(2)U34 oxidoreductase stretch occupies residues 280–697; that stretch reads VGGGLASANL…LRKLLKGKAL (418 aa).

It in the N-terminal section; belongs to the methyltransferase superfamily. tRNA (mnm(5)s(2)U34)-methyltransferase family. In the C-terminal section; belongs to the DAO family. It depends on FAD as a cofactor.

The protein resides in the cytoplasm. The enzyme catalyses 5-aminomethyl-2-thiouridine(34) in tRNA + S-adenosyl-L-methionine = 5-methylaminomethyl-2-thiouridine(34) in tRNA + S-adenosyl-L-homocysteine + H(+). Functionally, catalyzes the last two steps in the biosynthesis of 5-methylaminomethyl-2-thiouridine (mnm(5)s(2)U) at the wobble position (U34) in tRNA. Catalyzes the FAD-dependent demodification of cmnm(5)s(2)U34 to nm(5)s(2)U34, followed by the transfer of a methyl group from S-adenosyl-L-methionine to nm(5)s(2)U34, to form mnm(5)s(2)U34. The sequence is that of tRNA 5-methylaminomethyl-2-thiouridine biosynthesis bifunctional protein MnmC from Shewanella sp. (strain ANA-3).